Reading from the N-terminus, the 798-residue chain is Protocadherin beta-14 (798 aa).

The signal sequence occupies residues 1–26; the sequence is MEIRGALDLRKRQVLIFLVLLGLSRA. The Extracellular portion of the chain corresponds to 27 to 686; it reads GTESAHYSVA…APAQAQADSL (660 aa). Cadherin domains lie at 35 to 133, 138 to 242, 247 to 347, 352 to 451, and 456 to 561; these read VAEE…SPTF, ILIK…APEF, YEVQ…PPEV, ITKR…APAF, and YTLF…SPFV. The cysteines at positions 96 and 102 are disulfide-linked. Asn-169 carries N-linked (GlcNAc...) asparagine glycosylation. Asn-359, Asn-418, and Asn-436 each carry an N-linked (GlcNAc...) asparagine glycan. A glycan (N-linked (GlcNAc...) asparagine) is linked at Asn-567. One can recognise a Cadherin 6 domain in the interval 568–671; the sequence is GSAPCTELVP…LVDGFSQPYL (104 aa). Residues 687 to 711 traverse the membrane as a helical segment; the sequence is TVYLVVALASVSSLFLFSVLLFVAV. Over 712 to 798 the chain is Cytoplasmic; sequence RLCRRSRAAS…FRNSFGLNIQ (87 aa).

Its subcellular location is the cell membrane. Functionally, potential calcium-dependent cell-adhesion protein. May be involved in the establishment and maintenance of specific neuronal connections in the brain. The polypeptide is Protocadherin beta-14 (PCDHB14) (Pan troglodytes (Chimpanzee)).